The following is a 1501-amino-acid chain: Inactive protein tyrosine kinase pTKL (1501 aa).

N-linked (GlcNAc...) asparagine glycosylation is found at Asn-64, Asn-128, and Asn-133. The segment covering 204-221 has biased composition (basic residues); that stretch reads KKNKKNKKNKKKKNKKTK. A disordered region spans residues 204–223; sequence KKNKKNKKNKKKKNKKTKNT. N-linked (GlcNAc...) asparagine glycosylation is found at Asn-239, Asn-242, Asn-258, and Asn-327. Over residues 257–273 the composition is skewed to basic and acidic residues; it reads MNISLHEKNDKKNEKKN. The disordered stretch occupies residues 257-276; that stretch reads MNISLHEKNDKKNEKKNEKK. Residues 301–366 enclose the SAM domain; sequence WSLREVIQWL…LQLIKNLQVM (66 aa). The segment at 392 to 425 is disordered; it reads NKNIKKGKNIKKEKKKKKEKNIKKEKKKKKKETK. Residues 394 to 424 show a composition bias toward basic residues; the sequence is NIKKGKNIKKEKKKKKEKNIKKEKKKKKKET. Positions 399-433 form a coiled coil; it reads KNIKKEKKKKKEKNIKKEKKKKKKETKKFNNMDKK. 3 N-linked (GlcNAc...) asparagine glycosylation sites follow: Asn-448, Asn-463, and Asn-471. The RVxF motif 1 motif lies at 483-486; the sequence is KVSF. A glycan (N-linked (GlcNAc...) asparagine) is linked at Asn-506. A compositionally biased stretch (low complexity) spans 543–597; that stretch reads QLSSPLSSPLSSPSPSSSPSSSPSSSPSSSPSSSPSPSSSPSPSSSPSSSPSSSP. The segment at 543-607 is disordered; it reads QLSSPLSSPL…SSPPSPLSYK (65 aa). Asn-652 carries N-linked (GlcNAc...) asparagine glycosylation. The interval 659–678 is disordered; sequence IKKSKSKYNNDKKEQKKLPL. Residues 666–675 are compositionally biased toward basic and acidic residues; sequence YNNDKKEQKK. 5 N-linked (GlcNAc...) asparagine glycosylation sites follow: Asn-681, Asn-712, Asn-737, Asn-811, and Asn-819. Residues 836 to 844 and Lys-864 each bind ATP; that span reads QNINNFGKY. N-linked (GlcNAc...) asparagine glycans are attached at residues Asn-1024, Asn-1031, Asn-1074, and Asn-1157. In terms of domain architecture, Protein kinase spans 1088–1483; that stretch reads FHYQHNVLCG…HILKTISTLY (396 aa). The short motif at 1238–1241 is the RVxF motif 2 element; sequence KVLF. Asn-1382 carries N-linked (GlcNAc...) asparagine glycosylation.

This sequence belongs to the protein kinase superfamily. TKL Ser/Thr protein kinase family. Interacts (via RVxF motif 1 and/or 2) with phosphatase PP1C. May interact (via SAM domain) with SERA5 (via C-terminus).

It is found in the parasitophorous vacuole. It localises to the host cell membrane. The protein resides in the host cytoplasm. The protein localises to the host cytoskeleton. The sequence is that of Inactive protein tyrosine kinase pTKL from Plasmodium falciparum (isolate 3D7).